Reading from the N-terminus, the 79-residue chain is D-alanyl carrier protein (79 aa).

Positions 1–77 constitute a Carrier domain; that stretch reads MDIKAEVIEI…KIVEGVTELR (77 aa). Position 35 is an O-(pantetheine 4'-phosphoryl)serine (Ser35).

It belongs to the DltC family. In terms of processing, 4'-phosphopantetheine is transferred from CoA to a specific serine of apo-DCP.

Its subcellular location is the cytoplasm. Its pathway is cell wall biogenesis; lipoteichoic acid biosynthesis. In terms of biological role, carrier protein involved in the D-alanylation of lipoteichoic acid (LTA). The loading of thioester-linked D-alanine onto DltC is catalyzed by D-alanine--D-alanyl carrier protein ligase DltA. The DltC-carried D-alanyl group is further transferred to cell membrane phosphatidylglycerol (PG) by forming an ester bond, probably catalyzed by DltD. D-alanylation of LTA plays an important role in modulating the properties of the cell wall in Gram-positive bacteria, influencing the net charge of the cell wall. This Streptococcus sanguinis (strain SK36) protein is D-alanyl carrier protein.